We begin with the raw amino-acid sequence, 611 residues long: tRNA uridine 5-carboxymethylaminomethyl modification enzyme MnmG (611 aa).

12-17 (GGGHSG) contributes to the FAD binding site. Residue 271–285 (GPRYCPSIEEKVYRF) participates in NAD(+) binding.

Belongs to the MnmG family. In terms of assembly, homodimer. Heterotetramer of two MnmE and two MnmG subunits. FAD serves as cofactor.

The protein localises to the cytoplasm. Its function is as follows. NAD-binding protein involved in the addition of a carboxymethylaminomethyl (cmnm) group at the wobble position (U34) of certain tRNAs, forming tRNA-cmnm(5)s(2)U34. This is tRNA uridine 5-carboxymethylaminomethyl modification enzyme MnmG from Karelsulcia muelleri (strain GWSS) (Sulcia muelleri).